Consider the following 1447-residue polypeptide: Sister chromatid cohesion protein PDS5 homolog B (1447 aa).

The stretch at 383 to 419 (LLVNDHLLNFVRERTLDKRWRVRKEAMMGLAQIYKKY) is one HEAT repeat. Residues 1117–1447 (KSFFTPGKPK…RRRSAKRERR (331 aa)) are disordered. Residue K1136 is modified to N6-acetyllysine. Residues 1137–1155 (PLSSAGKQSQTKSSRMETV) show a composition bias toward polar residues. 6 positions are modified to phosphoserine: S1140, S1162, S1166, S1176, S1182, and S1191. The span at 1156-1167 (SNASSSSNPSSP) shows a compositional bias: low complexity. Positions 1172 to 1184 (GRLDSSEMDHSEN) are enriched in basic and acidic residues. 2 stretches are compositionally biased toward basic and acidic residues: residues 1196 to 1214 (KKSD…LEKP) and 1225 to 1243 (QEEK…EQKP). Basic residues predominate over residues 1245–1254 (GSQRSRKRGH). Residues 1249–1261 (SRKRGHTASESDE) constitute a DNA-binding region (a.T hook 1). A Phosphothreonine modification is found at T1255. Phosphoserine is present on residues S1257 and S1259. Residues 1265 to 1274 (PEEKRLKEDI) show a composition bias toward basic and acidic residues. S1283 bears the Phosphoserine mark. A DNA-binding region (a.T hook 2) is located at residues 1287-1299 (KGKRGRPPKPLGG). Positions 1310–1319 (TSKKGSKKKS) are enriched in basic residues. Phosphoserine occurs at positions 1319 and 1334. Over residues 1342 to 1353 (KSKQHRVSRRAQ) the composition is skewed to basic residues. Residues 1355 to 1372 (RAESPESSAIESTQSTPQ) are compositionally biased toward polar residues. Residues S1358 and S1366 each carry the phosphoserine modification. At T1367 the chain carries Phosphothreonine. Position 1369 is a phosphoserine (S1369). Phosphothreonine is present on residues T1370 and T1381. Residues 1372 to 1384 (QKGRGRPSKTPSP) constitute a DNA-binding region (a.T hook 3). Residues 1379–1388 (SKTPSPSQPK) are compositionally biased toward low complexity. S1383 and S1417 each carry phosphoserine. Residues 1422–1432 (IPQEETEEEEV) show a composition bias toward acidic residues. Residues 1437–1447 (VRRRSAKRERR) show a composition bias toward basic residues.

The protein belongs to the PDS5 family. In terms of assembly, interacts with the cohesin complex. Interacts with RAD21; the interaction is direct. Interacts with WAPL (via FGF motifs) or CDCA5 (via the FGF motif); the interaction is direct, cohesin-dependent and competitive. As to expression, widely expressed.

Its subcellular location is the nucleus. Its function is as follows. Regulator of sister chromatid cohesion in mitosis which may stabilize cohesin complex association with chromatin. May couple sister chromatid cohesion during mitosis to DNA replication. Cohesion ensures that chromosome partitioning is accurate in both meiotic and mitotic cells and plays an important role in DNA repair. Plays a role in androgen-induced proliferative arrest in prostate cells. The protein is Sister chromatid cohesion protein PDS5 homolog B (PDS5B) of Homo sapiens (Human).